Here is a 418-residue protein sequence, read N- to C-terminus: Triacylglycerol lipase 2 (418 aa).

The N-terminal stretch at 1-31 (MAGSVMVPSVSIGLALSVLIFFALSLKTLEA) is a signal peptide. A glycan (N-linked (GlcNAc...) asparagine) is linked at Asn-158. Catalysis depends on Ser-190, which acts as the Nucleophile. N-linked (GlcNAc...) asparagine glycosylation is found at Asn-286 and Asn-342. Catalysis depends on charge relay system residues Asp-360 and His-393.

The protein belongs to the AB hydrolase superfamily. Lipase family.

It localises to the secreted. It catalyses the reaction a triacylglycerol + H2O = a diacylglycerol + a fatty acid + H(+). In terms of biological role, triacylglycerol (TAG) lipase. May be involved for TAG storage breakdown during seed germination. In Arabidopsis thaliana (Mouse-ear cress), this protein is Triacylglycerol lipase 2 (LIP2).